The chain runs to 95 residues: Protein TusB (95 aa).

This sequence belongs to the DsrH/TusB family. Heterohexamer, formed by a dimer of trimers. The hexameric TusBCD complex contains 2 copies each of TusB, TusC and TusD. The TusBCD complex interacts with TusE.

It localises to the cytoplasm. Functionally, part of a sulfur-relay system required for 2-thiolation of 5-methylaminomethyl-2-thiouridine (mnm(5)s(2)U) at tRNA wobble positions. This chain is Protein TusB, found in Salmonella arizonae (strain ATCC BAA-731 / CDC346-86 / RSK2980).